The sequence spans 833 residues: Leucine--tRNA ligase (833 aa).

The 'HIGH' region motif lies at 41 to 52; that stretch reads PYPSGAGLHVGH. A 'KMSKS' region motif is present at residues 610-614; the sequence is KMSKS. Residue Lys-613 coordinates ATP.

It belongs to the class-I aminoacyl-tRNA synthetase family.

It localises to the cytoplasm. The catalysed reaction is tRNA(Leu) + L-leucine + ATP = L-leucyl-tRNA(Leu) + AMP + diphosphate. The polypeptide is Leucine--tRNA ligase (Streptococcus pneumoniae (strain Hungary19A-6)).